Reading from the N-terminus, the 71-residue chain is Large ribosomal subunit protein uL29 (71 aa).

It belongs to the universal ribosomal protein uL29 family.

The chain is Large ribosomal subunit protein uL29 from Roseiflexus sp. (strain RS-1).